A 584-amino-acid polypeptide reads, in one-letter code: Cilia- and flagella-associated protein 184 (584 aa).

3 stretches are compositionally biased toward basic and acidic residues: residues 1–18 (MDSH…EEGL), 42–57 (PEPK…REPE), and 67–82 (SKAK…HVEV). The disordered stretch occupies residues 1–243 (MDSHYGDIEG…ASTEEFEWTA (243 aa)). Residues 119–146 (DKDEDEDEDEDEDEDEDEDEDEDEDEGE) show a composition bias toward acidic residues. Over residues 189-232 (AKEKARESLKKRDSEEIEGTDRERHKSTEEQLHPGEAKEEEKQK) the composition is skewed to basic and acidic residues. Coiled coils occupy residues 317-470 (LAML…SNVQ) and 530-561 (LLGK…KRHH).

Belongs to the CFAP184 family. Forms a complex with CFAP263; the interaction is required for functional activity in cilia.

It is found in the cell projection. It localises to the cilium. Its subcellular location is the cytoplasm. The protein resides in the cytoskeleton. The protein localises to the microtubule organizing center. It is found in the centrosome. Functionally, in complex with CFAP263, acts as a regulator of ciliary beating that connects radial spoke 3 (RS3) to the inner dynein arm (IDA) and the nexin-dynein regulatory complex (N-DRC). The complex is positioned parallel to N-DRC and forms a connection between the arch at the base of RS3, the IDA tail and N-DRC. The sequence is that of Cilia- and flagella-associated protein 184 (Cfap184) from Mus musculus (Mouse).